A 434-amino-acid chain; its full sequence is Trigger factor (434 aa).

The PPIase FKBP-type domain maps to 160–245 (GDKVKMNFVG…LTEVQAANLP (86 aa)).

The protein belongs to the FKBP-type PPIase family. Tig subfamily.

It localises to the cytoplasm. The catalysed reaction is [protein]-peptidylproline (omega=180) = [protein]-peptidylproline (omega=0). In terms of biological role, involved in protein export. Acts as a chaperone by maintaining the newly synthesized protein in an open conformation. Functions as a peptidyl-prolyl cis-trans isomerase. The chain is Trigger factor from Shewanella baltica (strain OS185).